Reading from the N-terminus, the 670-residue chain is Lebercilin-like protein (670 aa).

A disordered region spans residues 24 to 44; sequence RRSAECKRSPGTGDFSRNSNA. Coiled-coil stretches lie at residues 148 to 259 and 305 to 336; these read LHKI…EREE and AAQTATKTLQVEVKHLQQKLKEKDRELEIKNI. A disordered region spans residues 351 to 402; it reads YPKVSSTKSVQADRKSLPFTSMRHQGTQKSDVAPLTTKGKKATGNMDRKEKS. The segment covering 368–380 has biased composition (polar residues); that stretch reads PFTSMRHQGTQKS. Positions 420–440 form a coiled coil; it reads EDSKTKYEDLSREEKHLEVQV. 3 disordered regions span residues 495-520, 533-594, and 606-647; these read RSMQRNGMDDTPDKCTAPYTKGPLRQ, LHHG…FRDK, and GYVL…AFGD. The segment covering 546-558 has biased composition (polar residues); the sequence is AGNTKYSHSTSKH. Composition is skewed to basic and acidic residues over residues 560 to 572, 585 to 594, and 621 to 632; these read SNREEMELEHSDS, KAKDTTFRDK, and GSEEPLQSKESH. The span at 637–647 shows a compositional bias: polar residues; the sequence is SQASASNAFGD.

Belongs to the LCA5 family.

The chain is Lebercilin-like protein from Papio anubis (Olive baboon).